The primary structure comprises 81 residues: Gamma-conotoxin-like TxMEKL-0511 (81 aa).

The first 19 residues, 1-19 (MEKLTILLLVAAVLLSIQA), serve as a signal peptide directing secretion. A propeptide spanning residues 20 to 45 (LNQEKHQRAKINLLSKRKPPAERWWR) is cleaved from the precursor. Disulfide bonds link Cys49–Cys63, Cys56–Cys67, and Cys62–Cys72.

It belongs to the conotoxin O2 superfamily. In terms of tissue distribution, expressed by the venom duct.

It is found in the secreted. Functionally, gamma-conotoxins may act on voltage-gated non-specific cation pacemaker channels (HCN). The protein is Gamma-conotoxin-like TxMEKL-0511 of Conus textile (Cloth-of-gold cone).